The sequence spans 357 residues: Alanine racemase (357 aa).

The active-site Proton acceptor; specific for D-alanine is the lysine 35. Residue lysine 35 is modified to N6-(pyridoxal phosphate)lysine. Residue arginine 130 participates in substrate binding. Tyrosine 253 functions as the Proton acceptor; specific for L-alanine in the catalytic mechanism. Residue methionine 302 participates in substrate binding.

It belongs to the alanine racemase family. Requires pyridoxal 5'-phosphate as cofactor.

It carries out the reaction L-alanine = D-alanine. It functions in the pathway amino-acid biosynthesis; D-alanine biosynthesis; D-alanine from L-alanine: step 1/1. Catalyzes the interconversion of L-alanine and D-alanine. May also act on other amino acids. The protein is Alanine racemase (alr) of Wigglesworthia glossinidia brevipalpis.